We begin with the raw amino-acid sequence, 405 residues long: Cytochrome P450 130 (405 aa).

Positions 93 and 97 each coordinate substrate. The heme site is built by Arg101, Gly243, Arg295, Tyr318, Ser348, His352, and Cys354.

It belongs to the cytochrome P450 family. As to quaternary structure, homodimer. Requires heme as cofactor.

The protein is Cytochrome P450 130 (cyp130) of Mycobacterium tuberculosis (strain CDC 1551 / Oshkosh).